Consider the following 256-residue polypeptide: Calsenilin (256 aa).

The interval 1-30 is disordered; the sequence is MQRAKEVMKVSDGSLLGEPGRTPLSKKEGV. A Phosphoserine modification is found at S14. A Glycyl lysine isopeptide (Lys-Gly) (interchain with G-Cter in SUMO1) cross-link involves residue K26. 2 S-palmitoyl cysteine lipidation sites follow: C45 and C46. 2 positions are modified to phosphoserine: S60 and S63. Residues 67–123 form the EF-hand 1; degenerate domain; the sequence is LELSAVRHQPEGLDQLQAQTKFTKKELQSLYRGFKNECPTGLVDEDTFKLIYSQFFP. Residue K90 forms a Glycyl lysine isopeptide (Lys-Gly) (interchain with G-Cter in SUMO1) linkage. EF-hand domains are found at residues 126-161, 162-197, and 210-245; these read DATT…LLRG, TVHE…IYDM, and APLE…DENI. The Ca(2+) site is built by D175, N177, D179, Y181, E186, D223, N225, D227, and E234. The tract at residues 243–256 is interaction with KCND2; that stretch reads ENIMSSMQLFENVI.

This sequence belongs to the recoverin family. In terms of assembly, binds to DNA as a homomultimer. Dimerization is induced by binding to calcium. Interacts with the C-terminus of PSEN1 and PSEN2 and with PSEN2 CTF subunit. Associates with KCN1. Component of heteromultimeric potassium channels. Identified in potassium channel complexes containing KCND1, KCND2, KCND3, KCNIP1, KCNIP2, KCNIP3, KCNIP4, DPP6 and DPP10. Interacts with KCND2 and KCND3. Post-translationally, palmitoylated. Palmitoylation enhances association with the plasma membrane. Proteolytically cleaved by caspase-3.

Its subcellular location is the cytoplasm. It is found in the cell membrane. The protein resides in the endoplasmic reticulum. It localises to the golgi apparatus. The protein localises to the nucleus. Functionally, regulatory subunit of Kv4/D (Shal)-type voltage-gated rapidly inactivating A-type potassium channels, such as KCND2/Kv4.2 and KCND3/Kv4.3. Modulates channel expression at the cell membrane, gating characteristics, inactivation kinetics and rate of recovery from inactivation in a calcium-dependent and isoform-specific manner. May play a role in the regulation of PSEN2 proteolytic processing and apoptosis. Together with PSEN2 involved in modulation of amyloid-beta formation. Its function is as follows. Calcium-dependent transcriptional repressor that binds to the DRE element of genes including PDYN and FOS. Affinity for DNA is reduced upon binding to calcium and enhanced by binding to magnesium. Seems to be involved in nociception. The sequence is that of Calsenilin (KCNIP3) from Bos taurus (Bovine).